We begin with the raw amino-acid sequence, 101 residues long: Guanyl-specific ribonuclease Po1 (101 aa).

Gln1 carries the pyrrolidone carboxylic acid modification. Cystine bridges form between Cys7–Cys84, Cys9–Cys99, and Cys48–Cys82. The active site involves His36. Glu54 functions as the Proton acceptor in the catalytic mechanism. His87 functions as the Proton donor in the catalytic mechanism.

It belongs to the ribonuclease N1/T1 family.

The catalysed reaction is [RNA] containing guanosine + H2O = an [RNA fragment]-3'-guanosine-3'-phosphate + a 5'-hydroxy-ribonucleotide-3'-[RNA fragment].. With respect to regulation, inhibited by divalent cations. Inhibition decreases in the order zinc, lead, cadmium, nickel, mercury. The sequence is that of Guanyl-specific ribonuclease Po1 from Pleurotus ostreatus (Oyster mushroom).